The sequence spans 201 residues: MYAYIRGKLTQLFPTHVVVESINGVGYEIQTPNSYRFQKYLEKELVIYTSLIVREDAQLLYGFINEEEKDMFLSLIKVTGIGPKSALAILATSTPNEVKMAIENENDAYLTKFPGIGKKTARQIVLDLKGKVQITRETTETLLSMNEENSNSENLVKEALLALEALGYSKREISKVEKVLNKSTFDSVDEAVKLGLKTLVS.

The tract at residues 1–64 (MYAYIRGKLT…EDAQLLYGFI (64 aa)) is domain I. Residues 65 to 143 (NEEEKDMFLS…ITRETTETLL (79 aa)) are domain II. Residues 144–150 (SMNEENS) form a flexible linker region. A domain III region spans residues 151–201 (NSENLVKEALLALEALGYSKREISKVEKVLNKSTFDSVDEAVKLGLKTLVS).

It belongs to the RuvA family. Homotetramer. Forms an RuvA(8)-RuvB(12)-Holliday junction (HJ) complex. HJ DNA is sandwiched between 2 RuvA tetramers; dsDNA enters through RuvA and exits via RuvB. An RuvB hexamer assembles on each DNA strand where it exits the tetramer. Each RuvB hexamer is contacted by two RuvA subunits (via domain III) on 2 adjacent RuvB subunits; this complex drives branch migration. In the full resolvosome a probable DNA-RuvA(4)-RuvB(12)-RuvC(2) complex forms which resolves the HJ.

Its subcellular location is the cytoplasm. Functionally, the RuvA-RuvB-RuvC complex processes Holliday junction (HJ) DNA during genetic recombination and DNA repair, while the RuvA-RuvB complex plays an important role in the rescue of blocked DNA replication forks via replication fork reversal (RFR). RuvA specifically binds to HJ cruciform DNA, conferring on it an open structure. The RuvB hexamer acts as an ATP-dependent pump, pulling dsDNA into and through the RuvAB complex. HJ branch migration allows RuvC to scan DNA until it finds its consensus sequence, where it cleaves and resolves the cruciform DNA. The polypeptide is Holliday junction branch migration complex subunit RuvA (Staphylococcus haemolyticus (strain JCSC1435)).